Reading from the N-terminus, the 102-residue chain is Large ribosomal subunit protein eL30 (102 aa).

Belongs to the eukaryotic ribosomal protein eL30 family. As to quaternary structure, part of the 50S ribosomal subunit.

This is Large ribosomal subunit protein eL30 from Thermococcus kodakarensis (strain ATCC BAA-918 / JCM 12380 / KOD1) (Pyrococcus kodakaraensis (strain KOD1)).